An 89-amino-acid chain; its full sequence is Small ribosomal subunit protein uS15 (89 aa).

Over residues 1 to 21 the composition is skewed to basic and acidic residues; sequence MVLDPTQKKSVIDAHAKHEGD. A disordered region spans residues 1 to 24; that stretch reads MVLDPTQKKSVIDAHAKHEGDTGS.

The protein belongs to the universal ribosomal protein uS15 family. In terms of assembly, part of the 30S ribosomal subunit. Forms a bridge to the 50S subunit in the 70S ribosome, contacting the 23S rRNA.

One of the primary rRNA binding proteins, it binds directly to 16S rRNA where it helps nucleate assembly of the platform of the 30S subunit by binding and bridging several RNA helices of the 16S rRNA. Functionally, forms an intersubunit bridge (bridge B4) with the 23S rRNA of the 50S subunit in the ribosome. This chain is Small ribosomal subunit protein uS15, found in Desulfovibrio desulfuricans (strain ATCC 27774 / DSM 6949 / MB).